The following is a 323-amino-acid chain: 2-methylene-furan-3-one reductase (323 aa).

NADP(+)-binding positions include K59, 174–175 (GV), 197–200 (STKK), Y216, I254, 265–267 (FVL), and 312–313 (RA). Substrate is bound at residue K59.

The protein belongs to the zinc-containing alcohol dehydrogenase family. Quinone oxidoreductase subfamily. As to quaternary structure, monomer. The N-terminus is blocked. Expressed in parenchyma tissues of red fruits. Not found in vascular tissues. Also detected in the achenes.

It carries out the reaction 4-hydroxy-2,5-dimethyl-furan-3(2H)-one + NADP(+) = 4-hydroxy-5-methyl-2-methylenefuran-3(2H)-one + NADPH + H(+). Functionally, enone oxidoreductase involved in the biosynthesis of 4-hydroxy-2,5-dimethyl-3(2H)-furanone (HDMF or furaneol), the key flavor compound in strawberries. Can use both NADH and NADPH as the electron donor. The chain is 2-methylene-furan-3-one reductase (EO) from Fragaria ananassa (Strawberry).